Consider the following 397-residue polypeptide: Tryptophan synthase beta chain (397 aa).

N6-(pyridoxal phosphate)lysine is present on Lys91.

The protein belongs to the TrpB family. Tetramer of two alpha and two beta chains. The cofactor is pyridoxal 5'-phosphate.

The enzyme catalyses (1S,2R)-1-C-(indol-3-yl)glycerol 3-phosphate + L-serine = D-glyceraldehyde 3-phosphate + L-tryptophan + H2O. Its pathway is amino-acid biosynthesis; L-tryptophan biosynthesis; L-tryptophan from chorismate: step 5/5. In terms of biological role, the beta subunit is responsible for the synthesis of L-tryptophan from indole and L-serine. The sequence is that of Tryptophan synthase beta chain from Bacillus cereus (strain ATCC 14579 / DSM 31 / CCUG 7414 / JCM 2152 / NBRC 15305 / NCIMB 9373 / NCTC 2599 / NRRL B-3711).